The chain runs to 138 residues: Phospholipase A2 crotoxin basic chain CBa2 (138 aa).

Residues 1–16 (MRALWIVAVLLVGVEG) form the signal peptide. Intrachain disulfides connect cysteine 42–cysteine 131, cysteine 44–cysteine 60, cysteine 59–cysteine 111, cysteine 65–cysteine 138, cysteine 66–cysteine 104, cysteine 73–cysteine 97, and cysteine 91–cysteine 102. Tyrosine 43, glycine 45, and glycine 47 together coordinate Ca(2+). Histidine 63 is a catalytic residue. Aspartate 64 lines the Ca(2+) pocket. The active site involves aspartate 105.

Belongs to the phospholipase A2 family. Group II subfamily. D49 sub-subfamily. As to quaternary structure, heterodimer of one of the acidic (CA1, CA2, CA3 or CA4) and one of the basic (CBa1, CBa2, CBb, CBc or CBd) subunits; non-covalently linked. The acidic subunit is non-toxic, without enzymatic activity and comprises 3 peptides that are cross-linked by 5 disulfide bridges. The basic subunit is toxic, has phospholipase A2 activity and is composed of a single chain. Multiple variants of each subunit give different crotoxin complexes that can be subdivided into 2 classes: (1) those of high toxicity, low PLA2 activity (CBb, CBc and CBd linked with high affinity to any CA) and high stability (K(d)=4.5 nM) and (2) those of moderate toxicity, high PLA2 activity (CBa2 linked with low affinity to any CA) and low stability (K(d)=25 nM). Interacts with human NBD1 domain of CFTR. Ca(2+) serves as cofactor. Expressed by the venom gland.

The protein resides in the secreted. The enzyme catalyses a 1,2-diacyl-sn-glycero-3-phosphocholine + H2O = a 1-acyl-sn-glycero-3-phosphocholine + a fatty acid + H(+). Functionally, heterodimer CA-CB: Crotoxin is a potent presynaptic neurotoxin that possesses phospholipase A2 (PLA2) activity and exerts a lethal action by blocking neuromuscular transmission. It consists of a non-covalent association of a basic and weakly toxic PLA2 subunit (CBa2, CBb, CBc, or CBd), with a small acidic, non-enzymatic and non-toxic subunit (CA1, CA2, CA3 or CA4). The complex acts by binding to a specific 48-kDa protein (R48) receptor located on presynaptic membranes, forming a transient ternary complex CA-CB-R48, followed by dissociation of the CA-CB complex and release of the CA subunit. At equilibrium, only the CB subunits remain associated with the specific crotoxin receptor. In addition to neurotoxicity, crotoxin has been found to exert myotoxicity, nephrotoxicity, and cardiovascular toxicity. Moreover, anti-inflammatory, immunomodulatory, anti-tumor and analgesic effects of crotoxin have also been reported. Its function is as follows. Monomer CBa2: The basic subunit of crotoxin is a snake venom phospholipase A2 (PLA2) that exhibits weak neurotoxicity (10-fold less than the heterodimer) and strong anticoagulant effects by binding to factor Xa (F10) and inhibiting the prothrombinase activity (IC(50) is 41 nM). In addition, it shows the same effects described for the heterodimer and binds the nucleotide-binding domain (NBD1) of CFTR chloride channels and increases the channel current. PLA2 catalyzes the calcium-dependent hydrolysis of the 2-acyl groups in 3-sn-phosphoglycerides. The chain is Phospholipase A2 crotoxin basic chain CBa2 from Crotalus durissus terrificus (South American rattlesnake).